The following is a 178-amino-acid chain: Epididymal-specific lipocalin-9 (178 aa).

An N-terminal signal peptide occupies residues methionine 1–alanine 16. N-linked (GlcNAc...) asparagine glycosylation is found at asparagine 46, asparagine 68, and asparagine 129. The cysteines at positions 83 and 176 are disulfide-linked.

This sequence belongs to the calycin superfamily. Lipocalin family. Expressed in epididymis. Not detected in all other tissues tested.

The protein localises to the secreted. The protein is Epididymal-specific lipocalin-9 (Lcn9) of Mus musculus (Mouse).